A 138-amino-acid polypeptide reads, in one-letter code: Flavodoxin (138 aa).

The region spanning 1–136 (MKIVYWSGTG…DCIEFGKKIA (136 aa)) is the Flavodoxin-like domain.

It belongs to the flavodoxin family. The cofactor is FMN.

Functionally, low-potential electron donor to a number of redox enzymes. This is Flavodoxin from Clostridium beijerinckii (Clostridium MP).